A 208-amino-acid polypeptide reads, in one-letter code: Outer-membrane lipoprotein LolB (208 aa).

The first 17 residues, 1 to 17 (MIRRLLGVALLTGAITG), serve as a signal peptide directing secretion. Cysteine 18 carries the N-palmitoyl cysteine lipid modification. Cysteine 18 carries the S-diacylglycerol cysteine lipid modification.

It belongs to the LolB family. In terms of assembly, monomer.

It localises to the cell outer membrane. In terms of biological role, plays a critical role in the incorporation of lipoproteins in the outer membrane after they are released by the LolA protein. This Marinobacter nauticus (strain ATCC 700491 / DSM 11845 / VT8) (Marinobacter aquaeolei) protein is Outer-membrane lipoprotein LolB.